The primary structure comprises 149 residues: UPF0260 protein PSEEN4031 (149 aa).

Belongs to the UPF0260 family.

This is UPF0260 protein PSEEN4031 from Pseudomonas entomophila (strain L48).